A 212-amino-acid chain; its full sequence is uncharacterized protein (212 aa).

A disordered region spans residues 1–88 (MAEEQKIALE…PAPAKPASAS (88 aa)). Serine 13 bears the Phosphoserine mark. Residues 23 to 41 (ADTPAPAPAEIPAPAPAPT) are compositionally biased toward pro residues. Positions 45-54 (VTKDVAEEKI) are enriched in basic and acidic residues.

It belongs to the remorin family.

The protein resides in the cell membrane. This is an uncharacterized protein from Arabidopsis thaliana (Mouse-ear cress).